The primary structure comprises 328 residues: Cell cycle control protein 50A (328 aa).

The disordered stretch occupies residues 1–28 (MAMNYSAKDEVDGGPTGPPGGAAKTRRP). An N-acetylalanine modification is found at alanine 2. Residues 2-48 (AMNYSAKDEVDGGPTGPPGGAAKTRRPDNTAFKQQRLPAWQPILTAG) form a required for ATPase and aminophospholipid flippase activity region. Residues 2–49 (AMNYSAKDEVDGGPTGPPGGAAKTRRPDNTAFKQQRLPAWQPILTAGT) lie on the Cytoplasmic side of the membrane. Residues 49-315 (TVLPTFFIIG…LGVVLLVINH (267 aa)) are interaction with ATP8A2. The chain crosses the membrane as a helical span at residues 50–70 (VLPTFFIIGLIFIPIGIGIFV). At 71 to 292 (TSNNIREIEG…SWMGGKNPFL (222 aa)) the chain is on the exoplasmic loop side. The interval 102-125 (RDDSQLNGDPSALLNPSKECEPYR) is disordered. A disulfide bridge links cysteine 121 with cysteine 135. N-linked (GlcNAc...) asparagine glycosylation is found at asparagine 144 and asparagine 261. The chain crosses the membrane as a helical span at residues 293–313 (GIAYITIGSISFLLGVVLLVI). Residues 314-328 (NHKYRNSSNTADITI) lie on the Cytoplasmic side of the membrane.

The protein belongs to the CDC50/LEM3 family. As to quaternary structure, component of various P4-ATPase flippase complexes which consists of a catalytic alpha subunit and an accessory beta subunit. Interacts with ATP8A1 to form a flippase complex; this complex forms an intermediate phosphoenzyme. Interacts with ATP8A2 to form a flippase complex. TP8B1:TMEM30A and ATP8B2:TMEM30A flippase complexes have been shown to form intermediate phosphoenzymes in vitro. Interacts with alpha subunits ATP8A1, ATP8B1, ATP8B2, ATP8B4, ATP10A, ATP10B, ATP10D, ATP11A, ATP11B and ATP11C. N-glycosylated. Contains high mannose-type oligosaccharides.

Its subcellular location is the membrane. The protein resides in the golgi apparatus. It is found in the cytoplasmic vesicle. The protein localises to the secretory vesicle membrane. It localises to the apical cell membrane. Its subcellular location is the photoreceptor inner segment. The protein resides in the cell projection. It is found in the cilium. The protein localises to the photoreceptor outer segment. In terms of biological role, accessory component of a P4-ATPase flippase complex which catalyzes the hydrolysis of ATP coupled to the transport of aminophospholipids from the outer to the inner leaflet of various membranes and ensures the maintenance of asymmetric distribution of phospholipids. Phospholipid translocation also seems to be implicated in vesicle formation and in uptake of lipid signaling molecules. The beta subunit may assist in binding of the phospholipid substrate. Required for the proper folding, assembly and ER to Golgi exit of the ATP8A2:TMEM30A flippase complex. ATP8A2:TMEM30A may be involved in regulation of neurite outgrowth, and, reconstituted to liposomes, predomiminantly transports phosphatidylserine (PS) and to a lesser extent phosphatidylethanolamine (PE). The ATP8A1:TMEM30A flippase complex seems to play a role in regulation of cell migration probably involving flippase-mediated translocation of phosphatidylethanolamine (PE) at the plasma membrane. Required for the formation of the ATP8A2, ATP8B1 and ATP8B2 P-type ATPAse intermediate phosphoenzymes. Involved in uptake of platelet-activating factor (PAF). Can also mediate the export of alpha subunits ATP8A1, ATP8B1, ATP8B2, ATP8B4, ATP10A, ATP10B, ATP10D, ATP11A, ATP11B and ATP11C from ER to other membrane localizations. This Rattus norvegicus (Rat) protein is Cell cycle control protein 50A.